Here is a 585-residue protein sequence, read N- to C-terminus: T-cell surface protein tactile (585 aa).

Residues 1-21 (MEKKWKYCAVYYIIQIHFVKG) form the signal peptide. Topologically, residues 22-519 (VWEKTVNTEE…IVVNKPKDGM (498 aa)) are extracellular. Positions 38–125 (GSDVNLTCQT…YECMLVLYPE (88 aa)) constitute an Ig-like V-type 1 domain. N-linked (GlcNAc...) asparagine glycosylation is found at asparagine 42, asparagine 97, asparagine 107, asparagine 148, asparagine 156, asparagine 166, asparagine 200, asparagine 215, asparagine 277, asparagine 278, asparagine 300, asparagine 350, and asparagine 368. Cysteines 45 and 118 form a disulfide. The region spanning 156–238 (NQTLEIPCFQ…YRLHLSPVQI (83 aa)) is the Ig-like V-type 2 domain. Cysteine 163 and cysteine 247 are joined by a disulfide. The Ig-like C2-type domain maps to 269-375 (PEIPVIVENN…VWNISSEKIT (107 aa)). An intrachain disulfide couples cysteine 290 to cysteine 355. Composition is skewed to polar residues over residues 385–418 (TDPP…SSVT), 426–452 (RPNT…SSGT), and 460–475 (RIPS…GAGS). A disordered region spans residues 385–475 (TDPPLSVTES…YSSSPSGAGS (91 aa)). The N-linked (GlcNAc...) asparagine glycan is linked to asparagine 435. The N-linked (GlcNAc...) asparagine glycan is linked to asparagine 497. Residues 520–540 (SWPVIVAALLFCCMILFGLGV) traverse the membrane as a helical segment. Topologically, residues 541 to 585 (RKWCQYQKEIMERPPPFKPPPPPIKYTCIQEPNESDLPYHEMETL) are cytoplasmic.

As to quaternary structure, homodimer; disulfide-linked. Interacts with PVR. As to expression, expressed on normal T-cell lines and clones, and some transformed T-cells, but no other cultured cell lines tested. It is expressed at very low levels on activated B-cells.

The protein localises to the membrane. In terms of biological role, may be involved in adhesive interactions of activated T and NK cells during the late phase of the immune response. Promotes NK cell-target adhesion by interacting with PVR present on target cells. May function at a time after T and NK cells have penetrated the endothelium using integrins and selectins, when they are actively engaging diseased cells and moving within areas of inflammation. In Homo sapiens (Human), this protein is T-cell surface protein tactile (CD96).